A 176-amino-acid polypeptide reads, in one-letter code: Pituitary adenylate cyclase-activating polypeptide (176 aa).

Positions 1 to 24 (MTMCSGARLALLVYGILMHSSVYG) are cleaved as a signal peptide. Positions 25–80 (SPAASGLRFPGIRPENEAYDEDGNPQQDFYDSEPPGVGSPASALRDAYALYYPAEE) are excised as a propeptide. 2 disordered regions span residues 36–62 (IRPE…PGVG) and 115–134 (GTPG…RHSD). The interval 150–158 (VKKYLAAVL) is important for receptor binding. Position 158 is a leucine amide (L158). A Lysine amide modification is found at K169. Positions 173 to 176 (IPYL) are excised as a propeptide.

The protein belongs to the glucagon family.

Its subcellular location is the secreted. Functionally, PACAP is a neuropeptide involved in diverse array of physiological processes through activating the PACAP subfamily of class B1 G protein-coupled receptors: VIP receptor 1 (VIPR1), VIP receptor 2 (VIPR2), and PACAP type I receptor (ADCYAP1R1). Exerts neuroprotective and general cytoprotective effects due to anti-apoptotic, anti-inflammatory, and antioxidant actions. Promotes neuron projection development through the RAPGEF2/Rap1/B-Raf/ERK pathway. In chromaffin cells, induces long-lasting increase of intracellular calcium concentrations and neuroendocrine secretion. Involved in the control of glucose homeostasis, induces insulin secretion by pancreatic beta cells. PACAP exists in two bioactive forms from proteolysis of the same precursor protein, PACAP27 and PACAP38, which differ by eleven amino acid residues in the C-terminus. The sequence is that of Pituitary adenylate cyclase-activating polypeptide (ADCYAP1) from Ovis aries (Sheep).